Consider the following 250-residue polypeptide: Flagellar L-ring protein (250 aa).

An N-terminal signal peptide occupies residues 1–32; sequence MTRINTNTQKNNNTKFSKLILGVMVSSIVLSG. Cys-33 carries N-palmitoyl cysteine lipidation. Residue Cys-33 is the site of S-diacylglycerol cysteine attachment.

The protein belongs to the FlgH family. As to quaternary structure, the basal body constitutes a major portion of the flagellar organelle and consists of four rings (L,P,S, and M) mounted on a central rod.

The protein localises to the cell outer membrane. It is found in the bacterial flagellum basal body. Assembles around the rod to form the L-ring and probably protects the motor/basal body from shearing forces during rotation. The polypeptide is Flagellar L-ring protein (Hydrogenovibrio crunogenus (strain DSM 25203 / XCL-2) (Thiomicrospira crunogena)).